Reading from the N-terminus, the 322-residue chain is Phosphatidylserine decarboxylase proenzyme (322 aa).

Residues aspartate 90, histidine 147, and serine 254 each act as charge relay system; for autoendoproteolytic cleavage activity in the active site. Catalysis depends on serine 254, which acts as the Schiff-base intermediate with substrate; via pyruvic acid; for decarboxylase activity. Serine 254 is subject to Pyruvic acid (Ser); by autocatalysis.

This sequence belongs to the phosphatidylserine decarboxylase family. PSD-B subfamily. Prokaryotic type I sub-subfamily. In terms of assembly, heterodimer of a large membrane-associated beta subunit and a small pyruvoyl-containing alpha subunit. The cofactor is pyruvate. Post-translationally, is synthesized initially as an inactive proenzyme. Formation of the active enzyme involves a self-maturation process in which the active site pyruvoyl group is generated from an internal serine residue via an autocatalytic post-translational modification. Two non-identical subunits are generated from the proenzyme in this reaction, and the pyruvate is formed at the N-terminus of the alpha chain, which is derived from the carboxyl end of the proenzyme. The autoendoproteolytic cleavage occurs by a canonical serine protease mechanism, in which the side chain hydroxyl group of the serine supplies its oxygen atom to form the C-terminus of the beta chain, while the remainder of the serine residue undergoes an oxidative deamination to produce ammonia and the pyruvoyl prosthetic group on the alpha chain. During this reaction, the Ser that is part of the protease active site of the proenzyme becomes the pyruvoyl prosthetic group, which constitutes an essential element of the active site of the mature decarboxylase.

Its subcellular location is the cell membrane. It catalyses the reaction a 1,2-diacyl-sn-glycero-3-phospho-L-serine + H(+) = a 1,2-diacyl-sn-glycero-3-phosphoethanolamine + CO2. The protein operates within phospholipid metabolism; phosphatidylethanolamine biosynthesis; phosphatidylethanolamine from CDP-diacylglycerol: step 2/2. Catalyzes the formation of phosphatidylethanolamine (PtdEtn) from phosphatidylserine (PtdSer). This Shigella dysenteriae serotype 1 (strain Sd197) protein is Phosphatidylserine decarboxylase proenzyme.